The primary structure comprises 63 residues: Beta-defensin 4 (63 aa).

The N-terminal stretch at 1-22 (MRIHYLLFSFLLVLLSPLSAFT) is a signal peptide. A Pyrrolidone carboxylic acid modification is found at glutamine 23. Disulfide bonds link cysteine 31–cysteine 59, cysteine 38–cysteine 52, and cysteine 42–cysteine 60.

The protein belongs to the beta-defensin family. As to expression, highly expressed in lung.

Its subcellular location is the secreted. In terms of biological role, exhibits antimicrobial activity against Gram-negative bacteria and Gram-positive bacteria. May act as a ligand for C-C chemokine receptor CCR6. Binds to CCR6 and induces chemotactic activity of CCR6-expressing cells. In Rattus norvegicus (Rat), this protein is Beta-defensin 4 (Defb4).